The following is a 66-amino-acid chain: Alpha-like toxin BmK-M7 (66 aa).

The LCN-type CS-alpha/beta domain maps to 2-64; the sequence is RDGYIALPHN…VPIRVPGRCH (63 aa). Cystine bridges form between C12–C63, C16–C36, C22–C46, and C26–C48.

It belongs to the long (4 C-C) scorpion toxin superfamily. Sodium channel inhibitor family. Alpha subfamily. In terms of tissue distribution, expressed by the venom gland.

The protein resides in the secreted. Functionally, alpha toxins bind voltage-independently at site-3 of sodium channels (Nav) and inhibit the inactivation of the activated channels, thereby blocking neuronal transmission. This toxin is active on both mammals and insects. It can be considered as a cardiotoxin, as it can bind to human cardiac sodium channel and modify its normal properties. The chain is Alpha-like toxin BmK-M7 from Olivierus martensii (Manchurian scorpion).